Here is a 150-residue protein sequence, read N- to C-terminus: D-aminoacyl-tRNA deacylase (150 aa).

The Gly-cisPro motif, important for rejection of L-amino acids signature appears at Gly-137–Pro-138.

Belongs to the DTD family. As to quaternary structure, homodimer.

The protein localises to the cytoplasm. The catalysed reaction is glycyl-tRNA(Ala) + H2O = tRNA(Ala) + glycine + H(+). It catalyses the reaction a D-aminoacyl-tRNA + H2O = a tRNA + a D-alpha-amino acid + H(+). Its function is as follows. An aminoacyl-tRNA editing enzyme that deacylates mischarged D-aminoacyl-tRNAs. Also deacylates mischarged glycyl-tRNA(Ala), protecting cells against glycine mischarging by AlaRS. Acts via tRNA-based rather than protein-based catalysis; rejects L-amino acids rather than detecting D-amino acids in the active site. By recycling D-aminoacyl-tRNA to D-amino acids and free tRNA molecules, this enzyme counteracts the toxicity associated with the formation of D-aminoacyl-tRNA entities in vivo and helps enforce protein L-homochirality. The sequence is that of D-aminoacyl-tRNA deacylase from Geotalea daltonii (strain DSM 22248 / JCM 15807 / FRC-32) (Geobacter daltonii).